We begin with the raw amino-acid sequence, 559 residues long: Peptidyl-prolyl isomerase cwc27 (559 aa).

Residues 11–184 (PTASATLHTT…YPVKVVSCEV (174 aa)) enclose the PPIase cyclophilin-type domain. Disordered stretches follow at residues 201–395 (ATAP…GFSS), 413–449 (ESADAKSGPHGKTSISASDTTKYTSQAKSNTEPEDEE), and 518–559 (PRER…REKP). Residues 261 to 273 (APKKTSPEAEQQT) are compositionally biased toward basic and acidic residues. Residues 305-319 (LPDPESPARSPPQSP) show a composition bias toward pro residues. 2 stretches are compositionally biased toward polar residues: residues 384-394 (GSSTNGVTGFS) and 425-442 (TSISASDTTKYTSQAKSN).

The protein belongs to the cyclophilin-type PPIase family. CWC27 subfamily. In terms of assembly, associated with the spliceosome.

The protein localises to the cytoplasm. The protein resides in the nucleus. It carries out the reaction [protein]-peptidylproline (omega=180) = [protein]-peptidylproline (omega=0). PPIases accelerate the folding of proteins. It catalyzes the cis-trans isomerization of proline imidic peptide bonds in oligopeptides. Involved in pre-mRNA splicing. This is Peptidyl-prolyl isomerase cwc27 (cwc27) from Aspergillus fumigatus (strain ATCC MYA-4609 / CBS 101355 / FGSC A1100 / Af293) (Neosartorya fumigata).